A 475-amino-acid polypeptide reads, in one-letter code: Ribulose bisphosphate carboxylase large chain (475 aa).

Positions 1–2 (MS) are excised as a propeptide. At Pro3 the chain carries N-acetylproline. N6,N6,N6-trimethyllysine is present on Lys14. Substrate is bound by residues Asn123 and Thr173. Catalysis depends on Lys175, which acts as the Proton acceptor. Residue Lys177 coordinates substrate. Residues Lys201, Asp203, and Glu204 each coordinate Mg(2+). An N6-carboxylysine modification is found at Lys201. His294 (proton acceptor) is an active-site residue. Residues Arg295, His327, and Ser379 each coordinate substrate.

The protein belongs to the RuBisCO large chain family. Type I subfamily. In terms of assembly, heterohexadecamer of 8 large chains and 8 small chains; disulfide-linked. The disulfide link is formed within the large subunit homodimers. It depends on Mg(2+) as a cofactor. The disulfide bond which can form in the large chain dimeric partners within the hexadecamer appears to be associated with oxidative stress and protein turnover.

The protein resides in the plastid. The protein localises to the chloroplast. The catalysed reaction is 2 (2R)-3-phosphoglycerate + 2 H(+) = D-ribulose 1,5-bisphosphate + CO2 + H2O. The enzyme catalyses D-ribulose 1,5-bisphosphate + O2 = 2-phosphoglycolate + (2R)-3-phosphoglycerate + 2 H(+). Functionally, ruBisCO catalyzes two reactions: the carboxylation of D-ribulose 1,5-bisphosphate, the primary event in carbon dioxide fixation, as well as the oxidative fragmentation of the pentose substrate in the photorespiration process. Both reactions occur simultaneously and in competition at the same active site. This is Ribulose bisphosphate carboxylase large chain from Liquidambar styraciflua (Sweetgum tree).